Here is a 199-residue protein sequence, read N- to C-terminus: MIKLIVGLGNPGAEYTATRHNAGFWLIDQLAREAGTTLRDERRFHGFYAKARLHGEEVHLLEPQTYMNRSGQSVVALAQFFKILPDQILVAHDELDLPPGTVKLKLGGGSGGHNGLKDITAHLSSQQYWRLRIGIGHPRDLISESARAGAKPDVANFVLKPPRREEQDVIDASIERALAVMPMVVKGELDRATMQLHRN.

Residue Tyr15 coordinates tRNA. Residue His20 is the Proton acceptor of the active site. The tRNA site is built by Tyr66, Asn68, and Asn114.

It belongs to the PTH family. As to quaternary structure, monomer.

Its subcellular location is the cytoplasm. It catalyses the reaction an N-acyl-L-alpha-aminoacyl-tRNA + H2O = an N-acyl-L-amino acid + a tRNA + H(+). Hydrolyzes ribosome-free peptidyl-tRNAs (with 1 or more amino acids incorporated), which drop off the ribosome during protein synthesis, or as a result of ribosome stalling. Functionally, catalyzes the release of premature peptidyl moieties from peptidyl-tRNA molecules trapped in stalled 50S ribosomal subunits, and thus maintains levels of free tRNAs and 50S ribosomes. The protein is Peptidyl-tRNA hydrolase of Burkholderia cenocepacia (strain HI2424).